A 209-amino-acid polypeptide reads, in one-letter code: 3-demethoxyubiquinol 3-hydroxylase (209 aa).

Residues Glu58, Glu88, His91, Glu140, Glu172, and His175 each contribute to the Fe cation site.

Belongs to the COQ7 family. Fe cation is required as a cofactor.

It is found in the cell membrane. It catalyses the reaction a 5-methoxy-2-methyl-3-(all-trans-polyprenyl)benzene-1,4-diol + AH2 + O2 = a 3-demethylubiquinol + A + H2O. The protein operates within cofactor biosynthesis; ubiquinone biosynthesis. Functionally, catalyzes the hydroxylation of 2-nonaprenyl-3-methyl-6-methoxy-1,4-benzoquinol during ubiquinone biosynthesis. This is 3-demethoxyubiquinol 3-hydroxylase from Polaromonas sp. (strain JS666 / ATCC BAA-500).